The primary structure comprises 547 residues: Natural resistance-associated macrophage protein 1 (547 aa).

The segment at 1–30 (MTGDKDPQSVSRPNYGSISHPPSSEPQQEP) is disordered. The Cytoplasmic portion of the chain corresponds to 1 to 54 (MTGDKDPQSVSRPNYGSISHPPSSEPQQEPLRTTYLSEKIPIPDTEPGTFSLRK). The segment covering 8 to 17 (QSVSRPNYGS) has biased composition (polar residues). A compositionally biased stretch (low complexity) spans 21–30 (PPSSEPQQEP). The chain crosses the membrane as a helical span at residues 55 to 75 (LWAFTGPGFLMSIAFLDPGNI). Residues 76-81 (ESDLQA) lie on the Extracellular side of the membrane. The chain crosses the membrane as a helical span at residues 82 to 102 (GAVAGFKLLWVLLWATVLGLL). Residues 103–139 (CQRLAARLGVVTGKDLGEICHLYYPKVPRTLLWLTIE) lie on the Cytoplasmic side of the membrane. The helical transmembrane segment at 140–160 (LAIVGSDMQEVIGTAIAFSLL) threads the bilayer. At 161–164 (SAGR) the chain is on the extracellular side. Residues 165–185 (IPLWGGVLITIVDTFFFLFLD) traverse the membrane as a helical segment. The Cytoplasmic segment spans residues 186–193 (NYGLRKLE). The chain crosses the membrane as a helical span at residues 194-214 (AFFGILITIMALTFGYEYVVA). The Extracellular portion of the chain corresponds to 215–240 (RPAQVALLQGLLLPSCPGCGRPELLQ). A helical membrane pass occupies residues 241–261 (AVGIVGAIIMPHNIYLHSALV). Over 262 to 286 (KSREIDRSRRPDIREANMYFLIEAS) the chain is Cytoplasmic. A helical transmembrane segment spans residues 287-307 (IALSVSFFINLFVVAVFGQAF). Topologically, residues 308–346 (YQQTNEAAFNVCANSSLHDYAKIFPRNNLTVEVDIYQGG) are extracellular. N-linked (GlcNAc...) asparagine glycosylation is found at Asn321 and Asn335. A helical membrane pass occupies residues 347–367 (VMLGCVFGPAALYIWAVGLLA). At 368–394 (AGQSSTMTGTYAGQFVMEGFLRLRWSR) the chain is on the cytoplasmic side. Residues 395–415 (FARVLLTRSCAILPTVLVVVF) traverse the membrane as a helical segment. Topologically, residues 416–432 (RDLKDLSGLNDLLNVLQ) are extracellular. A helical membrane pass occupies residues 433–453 (SLLLPFAVLPILTFTSMPALM). Residues 454–464 (QEFANGRLSKA) lie on the Cytoplasmic side of the membrane. The helical transmembrane segment at 465-485 (ITSFIMALVCAINLYFVVIYL) threads the bilayer. At 486–492 (PSLPHPA) the chain is on the extracellular side. A helical membrane pass occupies residues 493–513 (YFILVALLAIVYLGLTTYLVW). Topologically, residues 514–547 (TCFIAHGVTLLAHSSHQHFLYGLPDVEEKGKISG) are cytoplasmic.

It belongs to the NRAMP family.

Its subcellular location is the late endosome membrane. It localises to the lysosome membrane. It catalyses the reaction Zn(2+)(in) + H(+)(out) = Zn(2+)(out) + H(+)(in). It carries out the reaction Fe(2+)(in) + H(+)(out) = Fe(2+)(out) + H(+)(in). The enzyme catalyses Mn(2+)(in) + H(+)(out) = Mn(2+)(out) + H(+)(in). In terms of biological role, macrophage-specific antiporter that fluxes metal ions in either direction against a proton gradient. Localized to late endosomal lysosomal membranes, delivers bivalent cations from the cytosol into these acidic compartments where they may directly affect antimicrobial activity. Involved in iron metabolism and host natural resistance to infection with intracellular parasites. Pathogen resistance involves sequestration of Fe(2+) and Mn(2+), cofactors of both prokaryotic and eukaryotic catalases and superoxide dismutases, not only to protect the macrophage against its own generation of reactive oxygen species, but to deny the cations to the pathogen for synthesis of its protective enzymes. The sequence is that of Natural resistance-associated macrophage protein 1 (SLC11A1) from Canis lupus familiaris (Dog).